The sequence spans 165 residues: Neurotrophin-3 (165 aa).

An N-terminal signal peptide occupies residues 1-3; it reads IQS. A propeptide spanning residues 4 to 119 is cleaved from the precursor; the sequence is TSMDQGSLSE…VLNQTSRRKR (116 aa). Asn112 carries an N-linked (GlcNAc...) asparagine glycan.

It belongs to the NGF-beta family.

The protein localises to the secreted. In terms of biological role, seems to promote the survival of visceral and proprioceptive sensory neurons. This is Neurotrophin-3 (NTF3) from Morelia spilota (Carpet python).